A 713-amino-acid chain; its full sequence is Calpain-1 catalytic subunit (713 aa).

A Calpain catalytic domain is found at 55-354 (LFQDEAFPPV…FTKLEICNLT (300 aa)). Residues Gln-109 and Asp-114 each contribute to the Ca(2+) site. Catalysis depends on residues Cys-115, His-272, and Asn-296. Ca(2+)-binding residues include Asp-318 and Glu-323. Thr-354 carries the phosphothreonine modification. The segment at 355 to 525 (PDALKSRTLR…KKAGTQELDD (171 aa)) is domain III. The segment at 526-541 (QIQANLPDEKVLSEEE) is linker. EF-hand domains are found at residues 540–575 (EEIDDNFKTLFSKLAGDDMEISVKELQTILNRIISK), 584–617 (FSLESCRSMVNLMDRDGNGKLGLVEFNILWNRIR), 614–649 (NRIRNYLTIFRKFDLDKSGSMSAYEMRMAIEAAGFK), and 679–713 (VRLETMFRFFKLLDTDLDGVVTFDLFKWLQLTMFA). The segment at 542-712 (IDDNFKTLFS…LFKWLQLTMF (171 aa)) is domain IV. Ca(2+) contacts are provided by Asp-597, Asp-599, Asn-601, Lys-603, Glu-608, Asp-627, Asp-629, Ser-631, Ser-633, and Glu-638.

It belongs to the peptidase C2 family. In terms of assembly, forms a heterodimer with a small (regulatory) subunit CAPNS1. Requires Ca(2+) as cofactor. Post-translationally, undergoes calcium-induced successive autoproteolytic cleavages that generate a membrane-bound 78 kDa active form and an intracellular 75 kDa active form. Calpastatin reduces with high efficiency the transition from 78 kDa to 75 kDa calpain forms.

It localises to the cytoplasm. The protein resides in the cell membrane. The enzyme catalyses Broad endopeptidase specificity.. Its activity is regulated as follows. Activated by micromolar concentrations of calcium and inhibited by calpastatin. Calcium-regulated non-lysosomal thiol-protease which catalyzes limited proteolysis of substrates involved in cytoskeletal remodeling and signal transduction. Proteolytically cleaves CTBP1 at 'Asn-375', 'Gly-388' and 'His-410'. Cleaves and activates caspase-7 (CASP7). The sequence is that of Calpain-1 catalytic subunit from Mus musculus (Mouse).